The following is a 130-amino-acid chain: Protein UL145 (130 aa).

As to quaternary structure, interacts with host DDB1; this interaction promotes STAT2 degradation.

Plays a role in the inhibition of host innate immunity by exploiting host DDB1-cullin RING ubiquitin ligases (CRLs). Mechanistically, recruits host DDB1 via a DCAF-like interaction motif to antagonize IFN signaling by STAT2 degradation. The sequence is that of Protein UL145 (UL145) from Homo sapiens (Human).